We begin with the raw amino-acid sequence, 583 residues long: Epsin-2 (583 aa).

A 1,2-diacyl-sn-glycero-3-phospho-(1D-myo-inositol-4,5-bisphosphate) is bound by residues R8, K11, R25, N30, R63, and H73. Residues 12 to 144 (NIVNSYSEAE…KDEERLKVER (133 aa)) enclose the ENTH domain. Over residues 165-181 (QITFGRGSSQPNLSISH) the composition is skewed to polar residues. Positions 165-217 (QITFGRGSSQPNLSISHSEQEYGKAGGSPASYHGSTSPRVSSELEQARPQTSG) are disordered. R170 carries the omega-N-methylarginine modification. A phosphoserine mark is found at S173, S192, and S195. Over residues 197-216 (HGSTSPRVSSELEQARPQTS) the composition is skewed to polar residues. 2 UIM domains span residues 218 to 237 (EEEL…AEQE) and 243 to 262 (GDDL…TVKV). Disordered regions lie at residues 293 to 384 (SGPV…KPSP) and 411 to 457 (TSKK…PESF). 4 consecutive repeat copies span residues 301-303 (EPW), 313-315 (NPW), 326-328 (DPW), and 340-342 (DPW). Over residues 301-315 (EPWSTGTPANQTNPW) the composition is skewed to polar residues. The interval 301–377 (EPWSTGTPAN…SDAGKTADAW (77 aa)) is 6 X 3 AA repeats of [DE]-P-W. Residues 346–355 (TTASIQSVPK) show a composition bias toward polar residues. A run of 2 repeats spans residues 358 to 360 (DPW) and 375 to 377 (DAW). S431 is modified (phosphoserine). Residues 437 to 448 (SQSLTSASSKPS) show a composition bias toward low complexity. Phosphothreonine is present on T453. Repeat copies occupy residues 482-484 (NPF) and 496-498 (NPF). The interval 482–581 (NPFLAPGAAA…AQPAGTTNPF (100 aa)) is 3 X 3 AA repeats of N-P-F. S514 carries the phosphoserine modification. Repeat unit 3 spans residues 579-581 (NPF).

It belongs to the epsin family. As to quaternary structure, binds AP-2 and clathrin. Interacts with ITSN1. Interacts with UBQLN2. Binds EPS15. Ubiquitinated. Highly expressed in brain. Detected at lower levels in lung, liver, muscle and testis.

The protein localises to the cytoplasm. Functionally, plays a role in the formation of clathrin-coated invaginations and endocytosis. The protein is Epsin-2 (Epn2) of Rattus norvegicus (Rat).